A 999-amino-acid polypeptide reads, in one-letter code: Sarcoplasmic/endoplasmic reticulum calcium ATPase 3 (999 aa).

Met-1 is modified (N-acetylmethionine). Residues 1-48 are Cytoplasmic-facing; the sequence is MEEAHLLPAADVLRRFSVTAEGGLSPAQVTRARERYGPNELPTEEGKS. At Ser-17 the chain carries Phosphoserine. A Phosphothreonine modification is found at Thr-19. Ser-25 is modified (phosphoserine). A helical membrane pass occupies residues 49–69; that stretch reads LWELVLEQFEDLLVRILLLAA. At 70-89 the chain is on the extracellular side; it reads LVSFVLACFEEGEETTTAFV. Residues 90–110 traverse the membrane as a helical segment; sequence EPLVIVLILVANAVVGVWQER. Over 111–253 the chain is Cytoplasmic; that stretch reads NAENAIEALK…PERTPLQQKL (143 aa). Residues 254-273 form a helical membrane-spanning segment; it reads DEFGRQLSRAISVICMAVWV. The Extracellular portion of the chain corresponds to 274-295; that stretch reads INIGHFADPAHGGSWLRGAVYY. Residues 296 to 313 traverse the membrane as a helical segment; the sequence is FKIAVALAVAAIPEGLPA. Ca(2+)-binding residues include Val-304, Ala-305, Ile-307, and Glu-309. Over 314 to 757 the chain is Cytoplasmic; it reads VITTCLALGT…EEGRAIYSNM (444 aa). Asp-351 serves as the catalytic 4-aspartylphosphate intermediate. The Mg(2+) site is built by Asp-351 and Thr-353. Thr-353 is an ATP binding site. Residues 370 to 400 form an interaction with phospholamban 1 region; sequence AEAEAGTCRLHEFTISGTTYAPEGEVRQGEQ. Thr-415 is subject to Phosphothreonine. ATP-binding residues include Glu-442, Arg-489, Lys-515, Arg-560, Thr-625, Gly-626, and Asp-627. Ser-662 is modified (phosphoserine). ATP-binding residues include Arg-678 and Lys-684. A Mg(2+)-binding site is contributed by Asp-703. ATP is bound at residue Asn-706. A helical transmembrane segment spans residues 758 to 777; sequence KQFIRYLISSNVGEVVCIFL. Asn-768 and Glu-771 together coordinate Ca(2+). The Extracellular portion of the chain corresponds to 778 to 787; it reads TAILGLPEAL. The helical transmembrane segment at 788 to 808 threads the bilayer; it reads IPVQLLWVNLVTDGLPATALG. Positions 788 to 808 are interaction with phospholamban 2; sequence IPVQLLWVNLVTDGLPATALG. Positions 796, 799, and 800 each coordinate Ca(2+). Residues 809–828 are Cytoplasmic-facing; the sequence is FNPPDLDIMEKRPRNPREAL. The helical transmembrane segment at 829-851 threads the bilayer; it reads ISGWLFFRYLAIGVYVGLATVAA. Residues 852 to 897 are Extracellular-facing; it reads ATWWFLYDAEGPQVTFYQLRNFLKCSEDNPLFTGTDCEVFESRFPT. A disulfide bridge links Cys-876 with Cys-888. A helical transmembrane segment spans residues 898–917; the sequence is TMALSVLVTTEMCNALNSVS. Glu-908 lines the Ca(2+) pocket. At 918–930 the chain is on the cytoplasmic side; the sequence is ENQSLLRMPPWLN. A helical transmembrane segment spans residues 931-949; that stretch reads PWLLAAVAMSMALHFLILL. The Extracellular segment spans residues 950–964; the sequence is VPPLPLIFQVTPLSG. A helical transmembrane segment spans residues 965–985; sequence RQWVVVLQISLPVILLDEALK. Residues 986–999 are Cytoplasmic-facing; it reads YLSRKHVDEEKGRQ.

The protein belongs to the cation transport ATPase (P-type) (TC 3.A.3) family. Type IIA subfamily. As to quaternary structure, interacts with sarcolipin (SLN). Interacts with phospholamban (PLN). Interacts with myoregulin (MRLN). Interacts with DWORF. Interacts with VMP1. Interacts with TUNAR; the interaction occurs at low levels in low glucose conditions and is increased by high glucose levels. Mg(2+) is required as a cofactor. In terms of tissue distribution, expressed in endothelial tissues.

The protein localises to the endoplasmic reticulum membrane. The protein resides in the sarcoplasmic reticulum membrane. It carries out the reaction Ca(2+)(in) + ATP + H2O = Ca(2+)(out) + ADP + phosphate + H(+). Its activity is regulated as follows. Inhibited by sarcolipin (SLN), phospholamban (PLN) and myoregulin (MRLN). Enhanced by DWORF; DWORF increases activity by displacing sarcolipin (SLN), phospholamban (PLN) and myoregulin (MRLN). In terms of biological role, this magnesium-dependent enzyme catalyzes the hydrolysis of ATP coupled with the transport of calcium. Transports calcium ions from the cytosol into the sarcoplasmic/endoplasmic reticulum lumen. Contributes to calcium sequestration involved in muscular excitation/contraction. The polypeptide is Sarcoplasmic/endoplasmic reticulum calcium ATPase 3 (ATP2A3) (Sus scrofa (Pig)).